A 101-amino-acid polypeptide reads, in one-letter code: NADH-quinone oxidoreductase subunit K (101 aa).

Helical transmembrane passes span Leu-4–Leu-24, Ile-30–Phe-50, and Val-61–Leu-81.

This sequence belongs to the complex I subunit 4L family. As to quaternary structure, NDH-1 is composed of 14 different subunits. Subunits NuoA, H, J, K, L, M, N constitute the membrane sector of the complex.

Its subcellular location is the cell inner membrane. It carries out the reaction a quinone + NADH + 5 H(+)(in) = a quinol + NAD(+) + 4 H(+)(out). NDH-1 shuttles electrons from NADH, via FMN and iron-sulfur (Fe-S) centers, to quinones in the respiratory chain. The immediate electron acceptor for the enzyme in this species is believed to be ubiquinone. Couples the redox reaction to proton translocation (for every two electrons transferred, four hydrogen ions are translocated across the cytoplasmic membrane), and thus conserves the redox energy in a proton gradient. This Cupriavidus metallidurans (strain ATCC 43123 / DSM 2839 / NBRC 102507 / CH34) (Ralstonia metallidurans) protein is NADH-quinone oxidoreductase subunit K.